Reading from the N-terminus, the 180-residue chain is Large ribosomal subunit protein uL6 (180 aa).

This sequence belongs to the universal ribosomal protein uL6 family. In terms of assembly, part of the 50S ribosomal subunit.

Its function is as follows. This protein binds to the 23S rRNA, and is important in its secondary structure. It is located near the subunit interface in the base of the L7/L12 stalk, and near the tRNA binding site of the peptidyltransferase center. The protein is Large ribosomal subunit protein uL6 of Anaeromyxobacter sp. (strain Fw109-5).